Consider the following 138-residue polypeptide: Large ribosomal subunit protein uL14 (138 aa).

Belongs to the universal ribosomal protein uL14 family. As to quaternary structure, part of the 50S ribosomal subunit. Forms a cluster with proteins L3 and L24e, part of which may contact the 16S rRNA in 2 intersubunit bridges.

Functionally, binds to 23S rRNA. Forms part of two intersubunit bridges in the 70S ribosome. The polypeptide is Large ribosomal subunit protein uL14 (Sulfurisphaera tokodaii (strain DSM 16993 / JCM 10545 / NBRC 100140 / 7) (Sulfolobus tokodaii)).